The sequence spans 147 residues: uncharacterized protein (147 aa).

Residues 1 to 16 (MDHRAAFGYFSNACFK) are Extracellular-facing. The chain crosses the membrane as a helical span at residues 17-37 (VMLFSSLLASFASSVAFISLI). Residues 38–105 (TFSLSSSESP…FEAAFFLLTN (68 aa)) lie on the Cytoplasmic side of the membrane. The chain crosses the membrane as a helical span at residues 106–126 (EMIFFILYYFFSCLMFFYVAS). Residues 127–147 (ERNTNPKILQTINTKPLYIKN) are Extracellular-facing.

The protein localises to the membrane. This is an uncharacterized protein from Saccharomyces cerevisiae (strain ATCC 204508 / S288c) (Baker's yeast).